The following is a 586-amino-acid chain: Proteasome-associated ATPase (586 aa).

A coiled-coil region spans residues 11–76 (AWRELEAVRA…LREEVDRLGQ (66 aa)). 273 to 278 (GCGKTL) provides a ligand contact to ATP. The tract at residues 585 to 586 (YL) is docks into pockets in the proteasome alpha-ring.

The protein belongs to the AAA ATPase family. Homohexamer. Assembles into a hexameric ring structure that caps the 20S proteasome core. Strongly interacts with the prokaryotic ubiquitin-like protein Pup through a hydrophobic interface; the interacting region of ARC lies in its N-terminal coiled-coil domain. There is one Pup binding site per ARC hexamer ring. Upon ATP-binding, the C-terminus of ARC interacts with the alpha-rings of the proteasome core, possibly by binding to the intersubunit pockets.

The protein operates within protein degradation; proteasomal Pup-dependent pathway. In terms of biological role, ATPase which is responsible for recognizing, binding, unfolding and translocation of pupylated proteins into the bacterial 20S proteasome core particle. May be essential for opening the gate of the 20S proteasome via an interaction with its C-terminus, thereby allowing substrate entry and access to the site of proteolysis. Thus, the C-termini of the proteasomal ATPase may function like a 'key in a lock' to induce gate opening and therefore regulate proteolysis. In Nocardia farcinica (strain IFM 10152), this protein is Proteasome-associated ATPase.